The following is a 1447-amino-acid chain: Gag-Pol polyprotein (1447 aa).

G2 carries the N-myristoyl glycine; by host lipid modification. An interaction with Gp41 region spans residues 7-31 (VLSGGELDRWEKIRLRPGGKKKYKL). The interaction with host CALM1 stretch occupies residues 8–43 (LSGGELDRWEKIRLRPGGKKKYKLKHIVWASRELER). The interaction with host AP3D1 stretch occupies residues 12–19 (ELDRWEKI). The segment at 14–33 (DRWEKIRLRPGGKKKYKLKH) is interaction with membrane phosphatidylinositol 4,5-bisphosphate and RNA. The short motif at 16-22 (WEKIRLR) is the Nuclear export signal element. The Nuclear localization signal motif lies at 26–32 (KKKYKLK). An interaction with membrane phosphatidylinositol 4,5-bisphosphate region spans residues 73–77 (EELRS). A disordered region spans residues 106 to 128 (EEQNKSKKKAQQAAADTGHSSQV). Y132 carries the phosphotyrosine; by host modification. Positions 189-227 (NTVGGHQAAMQMLKETINEEAAEWDRVHPVHAGPIAPGQ) are interaction with human PPIA/CYPA and NUP153. A dimerization/Multimerization of capsid protein p24 region spans residues 277-363 (YSPTSILDIR…GGPGHKARVL (87 aa)). CCHC-type zinc fingers lie at residues 390 to 407 (VKCFNCGKEGHIARNCKA) and 411 to 428 (KGCWKCGKEGHQMKDCTE). The tract at residues 446–493 (REFSSEQTRANSPTISSEQTRANSPTRRELQVWGRDNNSPSEAGADRQ) is disordered. Residues 450–470 (SEQTRANSPTISSEQTRANSP) are compositionally biased toward polar residues. Residues 501–505 (PQITL) are dimerization of protease. One can recognise a Peptidase A2 domain in the interval 520–589 (KEALLDTGAD…TPVNIIGRNL (70 aa)). D525 acts as the For protease activity; shared with dimeric partner in catalysis. Dimerization of protease stretches follow at residues 549 to 555 (GIGGFIK) and 588 to 600 (NLLTQIGCTLNFP). Residues 643 to 833 (EGKISKIGPE…PPFLWMGYEL (191 aa)) form the Reverse transcriptase domain. Mg(2+) is bound by residues D709, D784, and D785. An RT 'primer grip' region spans residues 826–834 (FLWMGYELH). The Tryptophan repeat motif motif lies at 997-1013 (WETWWTEYWQATWIPEW). Positions 1033-1156 (IVGAETFYVD…VDKLVSAGIR (124 aa)) constitute an RNase H type-1 domain. D1042, E1077, D1097, and D1148 together coordinate Mg(2+). The Integrase-type zinc finger occupies 1162 to 1203 (DGIDKAQEEHEKYHSNWRAMASDFNLPPVVAKEIVASCDKCQ). Positions 1171, 1175, 1199, and 1202 each coordinate Zn(2+). In terms of domain architecture, Integrase catalytic spans 1213-1363 (VDCSPGIWQL…SAGERIVDII (151 aa)). Positions 1223, 1275, and 1311 each coordinate Mg(2+). The segment at residues 1382–1429 (FRVYYRDSRNPLWKGPAKLLWKGEGAVVIQDNSDIKVVPRRKAKIIRD) is a DNA-binding region (integrase-type).

In terms of assembly, homotrimer; further assembles as hexamers of trimers. Interacts with gp41 (via C-terminus). Interacts with host CALM1; this interaction induces a conformational change in the Matrix protein, triggering exposure of the myristate group. Interacts with host AP3D1; this interaction allows the polyprotein trafficking to multivesicular bodies during virus assembly. Part of the pre-integration complex (PIC) which is composed of viral genome, matrix protein, Vpr and integrase. Homodimer; the homodimer further multimerizes as homohexamers or homopentamers. Interacts with human PPIA/CYPA; This interaction stabilizes the capsid. Interacts with human NUP153. Interacts with host PDZD8; this interaction stabilizes the capsid. Interacts with monkey TRIM5; this interaction destabilizes the capsid. As to quaternary structure, homodimer, whose active site consists of two apposed aspartic acid residues. In terms of assembly, heterodimer of p66 RT and p51 RT (RT p66/p51). Heterodimerization of RT is essential for DNA polymerase activity. The overall folding of the subdomains is similar in p66 RT and p51 RT but the spatial arrangements of the subdomains are dramatically different. Homotetramer; may further associate as a homohexadecamer. Part of the pre-integration complex (PIC) which is composed of viral genome, matrix protein, Vpr and integrase. Interacts with human SMARCB1/INI1 and human PSIP1/LEDGF isoform 1. Interacts with human KPNA3; this interaction might play a role in nuclear import of the pre-integration complex. Interacts with human NUP153; this interaction might play a role in nuclear import of the pre-integration complex. The cofactor is Mg(2+). Specific enzymatic cleavages by the viral protease yield mature proteins. The protease is released by autocatalytic cleavage. The polyprotein is cleaved during and after budding, this process is termed maturation. Proteolytic cleavage of p66 RT removes the RNase H domain to yield the p51 RT subunit. Nucleocapsid protein p7 might be further cleaved after virus entry. In terms of processing, tyrosine phosphorylated presumably in the virion by a host kinase. Phosphorylation is apparently not a major regulator of membrane association. Post-translationally, phosphorylated possibly by host MAPK1; this phosphorylation is necessary for Pin1-mediated virion uncoating. Methylated by host PRMT6, impairing its function by reducing RNA annealing and the initiation of reverse transcription.

The protein resides in the host cell membrane. It localises to the host endosome. The protein localises to the host multivesicular body. Its subcellular location is the virion membrane. It is found in the host nucleus. The protein resides in the host cytoplasm. It localises to the virion. It catalyses the reaction Specific for a P1 residue that is hydrophobic, and P1' variable, but often Pro.. It carries out the reaction Endohydrolysis of RNA in RNA/DNA hybrids. Three different cleavage modes: 1. sequence-specific internal cleavage of RNA. Human immunodeficiency virus type 1 and Moloney murine leukemia virus enzymes prefer to cleave the RNA strand one nucleotide away from the RNA-DNA junction. 2. RNA 5'-end directed cleavage 13-19 nucleotides from the RNA end. 3. DNA 3'-end directed cleavage 15-20 nucleotides away from the primer terminus.. The enzyme catalyses 3'-end directed exonucleolytic cleavage of viral RNA-DNA hybrid.. The catalysed reaction is DNA(n) + a 2'-deoxyribonucleoside 5'-triphosphate = DNA(n+1) + diphosphate. Its activity is regulated as follows. Protease: The viral protease is inhibited by many synthetic protease inhibitors (PIs), such as amprenavir, atazanavir, indinavir, loprinavir, nelfinavir, ritonavir and saquinavir. Use of protease inhibitors in tritherapy regimens permit more ambitious therapeutic strategies. Reverse transcriptase/ribonuclease H: RT can be inhibited either by nucleoside RT inhibitors (NRTIs) or by non nucleoside RT inhibitors (NNRTIs). NRTIs act as chain terminators, whereas NNRTIs inhibit DNA polymerization by binding a small hydrophobic pocket near the RT active site and inducing an allosteric change in this region. Classical NRTIs are abacavir, adefovir (PMEA), didanosine (ddI), lamivudine (3TC), stavudine (d4T), tenofovir (PMPA), zalcitabine (ddC), and zidovudine (AZT). Classical NNRTIs are atevirdine (BHAP U-87201E), delavirdine, efavirenz (DMP-266), emivirine (I-EBU), and nevirapine (BI-RG-587). The tritherapies used as a basic effective treatment of AIDS associate two NRTIs and one NNRTI. Mediates, with Gag polyprotein, the essential events in virion assembly, including binding the plasma membrane, making the protein-protein interactions necessary to create spherical particles, recruiting the viral Env proteins, and packaging the genomic RNA via direct interactions with the RNA packaging sequence (Psi). Gag-Pol polyprotein may regulate its own translation, by the binding genomic RNA in the 5'-UTR. At low concentration, the polyprotein would promote translation, whereas at high concentration, the polyprotein would encapsidate genomic RNA and then shut off translation. In terms of biological role, targets the polyprotein to the plasma membrane via a multipartite membrane-binding signal, that includes its myristoylated N-terminus. Matrix protein is part of the pre-integration complex. Implicated in the release from host cell mediated by Vpu. Binds to RNA. Its function is as follows. Forms the conical core that encapsulates the genomic RNA-nucleocapsid complex in the virion. Most core are conical, with only 7% tubular. The core is constituted by capsid protein hexamer subunits. The core is disassembled soon after virion entry. Host restriction factors such as TRIM5-alpha or TRIMCyp bind retroviral capsids and cause premature capsid disassembly, leading to blocks in reverse transcription. Capsid restriction by TRIM5 is one of the factors which restricts HIV-1 to the human species. Host PIN1 apparently facilitates the virion uncoating. On the other hand, interactions with PDZD8 or CYPA stabilize the capsid. Functionally, encapsulates and protects viral dimeric unspliced genomic RNA (gRNA). Binds these RNAs through its zinc fingers. Acts as a nucleic acid chaperone which is involved in rearangement of nucleic acid secondary structure during gRNA retrotranscription. Also facilitates template switch leading to recombination. As part of the polyprotein, participates in gRNA dimerization, packaging, tRNA incorporation and virion assembly. Aspartyl protease that mediates proteolytic cleavages of Gag and Gag-Pol polyproteins during or shortly after the release of the virion from the plasma membrane. Cleavages take place as an ordered, step-wise cascade to yield mature proteins. This process is called maturation. Displays maximal activity during the budding process just prior to particle release from the cell. Also cleaves Nef and Vif, probably concomitantly with viral structural proteins on maturation of virus particles. Hydrolyzes host EIF4GI and PABP1 in order to shut off the capped cellular mRNA translation. The resulting inhibition of cellular protein synthesis serves to ensure maximal viral gene expression and to evade host immune response. Also mediates cleavage of host YTHDF3. Mediates cleavage of host CARD8, thereby activating the CARD8 inflammasome, leading to the clearance of latent HIV-1 in patient CD4(+) T-cells after viral reactivation; in contrast, HIV-1 can evade CARD8-sensing when its protease remains inactive in infected cells prior to viral budding. In terms of biological role, multifunctional enzyme that converts the viral RNA genome into dsDNA in the cytoplasm, shortly after virus entry into the cell. This enzyme displays a DNA polymerase activity that can copy either DNA or RNA templates, and a ribonuclease H (RNase H) activity that cleaves the RNA strand of RNA-DNA heteroduplexes in a partially processive 3' to 5' endonucleasic mode. Conversion of viral genomic RNA into dsDNA requires many steps. A tRNA(3)-Lys binds to the primer-binding site (PBS) situated at the 5'-end of the viral RNA. RT uses the 3' end of the tRNA primer to perform a short round of RNA-dependent minus-strand DNA synthesis. The reading proceeds through the U5 region and ends after the repeated (R) region which is present at both ends of viral RNA. The portion of the RNA-DNA heteroduplex is digested by the RNase H, resulting in a ssDNA product attached to the tRNA primer. This ssDNA/tRNA hybridizes with the identical R region situated at the 3' end of viral RNA. This template exchange, known as minus-strand DNA strong stop transfer, can be either intra- or intermolecular. RT uses the 3' end of this newly synthesized short ssDNA to perform the RNA-dependent minus-strand DNA synthesis of the whole template. RNase H digests the RNA template except for two polypurine tracts (PPTs) situated at the 5'-end and near the center of the genome. It is not clear if both polymerase and RNase H activities are simultaneous. RNase H probably can proceed both in a polymerase-dependent (RNA cut into small fragments by the same RT performing DNA synthesis) and a polymerase-independent mode (cleavage of remaining RNA fragments by free RTs). Secondly, RT performs DNA-directed plus-strand DNA synthesis using the PPTs that have not been removed by RNase H as primers. PPTs and tRNA primers are then removed by RNase H. The 3' and 5' ssDNA PBS regions hybridize to form a circular dsDNA intermediate. Strand displacement synthesis by RT to the PBS and PPT ends produces a blunt ended, linear dsDNA copy of the viral genome that includes long terminal repeats (LTRs) at both ends. Its function is as follows. Catalyzes viral DNA integration into the host chromosome, by performing a series of DNA cutting and joining reactions. This enzyme activity takes place after virion entry into a cell and reverse transcription of the RNA genome in dsDNA. The first step in the integration process is 3' processing. This step requires a complex comprising the viral genome, matrix protein, Vpr and integrase. This complex is called the pre-integration complex (PIC). The integrase protein removes 2 nucleotides from each 3' end of the viral DNA, leaving recessed CA OH's at the 3' ends. In the second step, the PIC enters cell nucleus. This process is mediated through integrase and Vpr proteins, and allows the virus to infect a non dividing cell. This ability to enter the nucleus is specific of lentiviruses, other retroviruses cannot and rely on cell division to access cell chromosomes. In the third step, termed strand transfer, the integrase protein joins the previously processed 3' ends to the 5' ends of strands of target cellular DNA at the site of integration. The 5'-ends are produced by integrase-catalyzed staggered cuts, 5 bp apart. A Y-shaped, gapped, recombination intermediate results, with the 5'-ends of the viral DNA strands and the 3' ends of target DNA strands remaining unjoined, flanking a gap of 5 bp. The last step is viral DNA integration into host chromosome. This involves host DNA repair synthesis in which the 5 bp gaps between the unjoined strands are filled in and then ligated. Since this process occurs at both cuts flanking the HIV genome, a 5 bp duplication of host DNA is produced at the ends of HIV-1 integration. Alternatively, Integrase may catalyze the excision of viral DNA just after strand transfer, this is termed disintegration. The sequence is that of Gag-Pol polyprotein (gag-pol) from Homo sapiens (Human).